The sequence spans 469 residues: Ribosomal protein uS12 methylthiotransferase RimO (469 aa).

An MTTase N-terminal domain is found at 34–144 (NKIGFVSLGC…VLEHVHQFAP (111 aa)). Residues cysteine 43, cysteine 79, cysteine 108, cysteine 176, cysteine 180, and cysteine 183 each contribute to the [4Fe-4S] cluster site. Positions 162–399 (LTPKHYAYLK…MLVQQEISAA (238 aa)) constitute a Radical SAM core domain. The region spanning 402–468 (QKRIGSTMKV…EYDLWGSLVR (67 aa)) is the TRAM domain.

This sequence belongs to the methylthiotransferase family. RimO subfamily. Requires [4Fe-4S] cluster as cofactor.

It is found in the cytoplasm. It catalyses the reaction L-aspartate(89)-[ribosomal protein uS12]-hydrogen + (sulfur carrier)-SH + AH2 + 2 S-adenosyl-L-methionine = 3-methylsulfanyl-L-aspartate(89)-[ribosomal protein uS12]-hydrogen + (sulfur carrier)-H + 5'-deoxyadenosine + L-methionine + A + S-adenosyl-L-homocysteine + 2 H(+). Catalyzes the methylthiolation of an aspartic acid residue of ribosomal protein uS12. The sequence is that of Ribosomal protein uS12 methylthiotransferase RimO from Vibrio vulnificus (strain CMCP6).